The following is a 609-amino-acid chain: UvrABC system protein C (609 aa).

One can recognise a GIY-YIG domain in the interval 13 to 91 (HEPGVYRMYD…IKLYQPRYNV (79 aa)). The 36-residue stretch at 201-236 (QQVLDYLIGKMEQASRNLDFEQAARYRDQIQAVRSV) folds into the UVR domain.

The protein belongs to the UvrC family. Interacts with UvrB in an incision complex.

It localises to the cytoplasm. Its function is as follows. The UvrABC repair system catalyzes the recognition and processing of DNA lesions. UvrC both incises the 5' and 3' sides of the lesion. The N-terminal half is responsible for the 3' incision and the C-terminal half is responsible for the 5' incision. The chain is UvrABC system protein C from Haemophilus influenzae (strain 86-028NP).